Here is a 2194-residue protein sequence, read N- to C-terminus: PDZ and LIM domain protein Zasp (2194 aa).

A PDZ domain is found at 8–90 (QIKLSRFDAQ…NFVITVQRGG (83 aa)). Residues 211–277 (TGQSTPAFGN…KPPSTGGLPT (67 aa)) are disordered. A compositionally biased stretch (low complexity) spans 228-253 (PQQLQQPQQQYNQHQQHYHQQQQQQQ). One can recognise an LIM zinc-binding 1 domain in the interval 280–339 (NICTECERLITGVFVRIKDKNLHVECFKCATCGTSLKNQGYYNFNNKLYCDIHAKQAAIN). The segment covering 415-435 (AATPQAATATDSPAATASSSD) has biased composition (low complexity). Disordered regions lie at residues 415–436 (AATP…SSDN), 457–476 (VALA…DQPF), 511–558 (GAAA…AVEE), 580–611 (SRQS…YIPP), 623–692 (VQQV…TTSE), 896–940 (AAAA…PRGS), 1223–1260 (LTQK…QRTQ), 1297–1322 (QSQS…PPAN), 1550–1632 (LNAS…QQPE), 1646–1738 (QREQ…YGKT), and 1815–1837 (APPP…SGYQ). The segment covering 515–530 (PKSPVSYPPQQQQQSP) has biased composition (low complexity). Polar residues-rich tracts occupy residues 580-590 (SRQSQRGSSFT) and 644-667 (VGTS…TASA). A compositionally biased stretch (low complexity) spans 676 to 692 (SSDSYTSTSTTTTTTSE). A compositionally biased stretch (polar residues) spans 1598–1610 (QTGSITTGQSYQG). Low complexity-rich tracts occupy residues 1616-1630 (SEQS…YNQQ), 1646-1668 (QREQ…TRSQ), and 1699-1727 (SQSV…QNQS). LIM zinc-binding domains lie at 2018–2078 (PLCN…KYLA), 2079–2138 (PTCS…LFTT), and 2139–2194 (KCFA…NHAR).

As to quaternary structure, interacts with alpha-actinin (Actn). As to expression, expression is first detected in the proctodeum and the midgut primordium. In stage 11 embryos, expression is predominant in the leading edge of epidermal cells adjacent to the amnioserosa. Stage 12 embryos exhibit expression in the midgut and the leading edge. Expressed in several rows of germ band cells next to the leading edge at stage 14. Strong expression is visible in the midgut and pharyngeal muscles of stage 17 embryos. Also expressed in somatic muscles and visceral mesoderm. Colocalizes with mys (beta PS integrin) in myotendinous junctions and with Actn in muscle Z lines.

Its subcellular location is the cytoplasm. The protein resides in the cytoskeleton. Regulator of cell matrix adhesion having two related functions, one upstream of Actn organizing the Z line and the other downstream of integrins regulating assembly of integrin adhesion sites. Also required for the formation of myotendinous junctions in muscles. In Drosophila melanogaster (Fruit fly), this protein is PDZ and LIM domain protein Zasp (Zasp52).